Consider the following 326-residue polypeptide: UDP-3-O-acylglucosamine N-acyltransferase (326 aa).

The active-site Proton acceptor is the histidine 235.

The protein belongs to the transferase hexapeptide repeat family. LpxD subfamily. In terms of assembly, homotrimer.

The catalysed reaction is a UDP-3-O-[(3R)-3-hydroxyacyl]-alpha-D-glucosamine + a (3R)-hydroxyacyl-[ACP] = a UDP-2-N,3-O-bis[(3R)-3-hydroxyacyl]-alpha-D-glucosamine + holo-[ACP] + H(+). The protein operates within bacterial outer membrane biogenesis; LPS lipid A biosynthesis. Its function is as follows. Catalyzes the N-acylation of UDP-3-O-acylglucosamine using 3-hydroxyacyl-ACP as the acyl donor. Is involved in the biosynthesis of lipid A, a phosphorylated glycolipid that anchors the lipopolysaccharide to the outer membrane of the cell. The sequence is that of UDP-3-O-acylglucosamine N-acyltransferase from Helicobacter hepaticus (strain ATCC 51449 / 3B1).